Consider the following 223-residue polypeptide: Probable chemoreceptor glutamine deamidase CheD (223 aa).

A disordered region spans residues 189-223 (QTASAKAHTPPQIERFSAPAKPRFERFTRPSTATS).

The protein belongs to the CheD family.

The catalysed reaction is L-glutaminyl-[protein] + H2O = L-glutamyl-[protein] + NH4(+). In terms of biological role, probably deamidates glutamine residues to glutamate on methyl-accepting chemotaxis receptors (MCPs), playing an important role in chemotaxis. The chain is Probable chemoreceptor glutamine deamidase CheD from Bordetella petrii (strain ATCC BAA-461 / DSM 12804 / CCUG 43448).